We begin with the raw amino-acid sequence, 182 residues long: Putative minor fimbrial subunit PmfF (182 aa).

The first 22 residues, 1–22 (MKNSIIKSAITCLLLLSPSTFA), serve as a signal peptide directing secretion.

The protein belongs to the fimbrial protein family.

It is found in the fimbrium. This is Putative minor fimbrial subunit PmfF (pmfF) from Proteus mirabilis (strain HI4320).